The following is a 199-amino-acid chain: Ion-translocating oxidoreductase complex subunit A (199 aa).

6 helical membrane-spanning segments follow: residues leucine 8 to glycine 28, valine 49 to valine 69, phenylalanine 75 to isoleucine 95, serine 106 to leucine 126, valine 138 to isoleucine 158, and alanine 178 to leucine 198.

This sequence belongs to the NqrDE/RnfAE family. In terms of assembly, the Rnf complex is probably composed of eight subunits, including RnfA, RnfB, RnfC, RnfD, RnfE and RnfG.

It localises to the cell membrane. In terms of biological role, part of a membrane-bound complex that couples electron transfer with translocation of ions across the membrane. Catalyzes Na(+) transport, most probably coupled to electron transfer from reduced ferredoxin to methanophenazine and heterodisulfide reductase. Involved in heterodisulfide reduction during methanogenesis from acetate. This chain is Ion-translocating oxidoreductase complex subunit A, found in Methanosarcina acetivorans (strain ATCC 35395 / DSM 2834 / JCM 12185 / C2A).